The sequence spans 397 residues: Cephalotocin receptor 1 (397 aa).

The Extracellular segment spans residues 1-48 (MRYITTHPNEISTQIWNNFSSTEIWSNFSAAKNETQPIRRNQDLANAE). 3 N-linked (GlcNAc...) asparagine glycosylation sites follow: N18, N27, and N33. A helical membrane pass occupies residues 49 to 69 (VITLAVVIIITVIGNSIVLIT). At 70–91 (LFQRRKKLTRMHLFILHLSVTD) the chain is on the cytoplasmic side. Residues 92–112 (LFVAFFNNLPQMIWDITFLFL) traverse the membrane as a helical segment. Over 113–120 (GTDLLCRL) the chain is Extracellular. Cysteines 118 and 194 form a disulfide. A helical transmembrane segment spans residues 121-141 (VTYLQSVAMYASSYVLVATAI). The Cytoplasmic portion of the chain corresponds to 142–162 (DRYFAICHPLSSHKWTTARVH). Residues 163–183 (VMVFIAWMLSFLFSTPQLFIW) form a helical membrane-spanning segment. The Extracellular portion of the chain corresponds to 184-205 (SMQFSNIGLTCQATFDPEWTLK). The helical transmembrane segment at 206-226 (FYITWLTVAIWILPTIALTLF) threads the bilayer. Residues 227–293 (YGMMCFAVWK…RGISRAKVRS (67 aa)) are Cytoplasmic-facing. A helical transmembrane segment spans residues 294 to 314 (VALTLSVVACCFICWSPFFVC). Topologically, residues 315-331 (QMWAAWDENAPYSGAIY) are extracellular. A helical transmembrane segment spans residues 332-352 (TILLLLSSLNSCTNPWIYMIF). The Cytoplasmic portion of the chain corresponds to 353–397 (SVFQHRAKTSRFVNDEETTSVTVLSSRNDIRLMSMKKKLEQTARN).

Belongs to the G-protein coupled receptor 1 family. Vasopressin/oxytocin receptor subfamily. As to expression, present in brain, buccal ganglion, gastric ganglion, olfactory lube, peduncle lobe, optical lobe, pancreas, the oviduct and the ovary.

Its subcellular location is the cell membrane. Acts as a receptor for cephalotocin. The protein is Cephalotocin receptor 1 of Octopus vulgaris (Common octopus).